A 96-amino-acid polypeptide reads, in one-letter code: Protein RnfH (96 aa).

This sequence belongs to the UPF0125 (RnfH) family.

The protein is Protein RnfH of Pectobacterium carotovorum subsp. carotovorum (strain PC1).